Consider the following 257-residue polypeptide: MQRVDLNSDLGESFGAYTIGQDDRVLEHVTSANIACGYHAGDHNVMARTVKLAADKGMGIGAHPGFPDLLGFGRRNIQTDHKDIYNFIVYQVAALNGFCQLHRVRMQHVKPHGALYNMAAKDRVIAEAIAEAIYDIDPSLILFGLSGSELIKAGKKLGLTVANEVFADRTYQPDGTLTPRSEANALIKESERATEQVIQMVKESKVIAVDGSHIPIEADTICVHGDSPTALSFIERLHAQLQVEGVTVTKVSDFLFK.

Belongs to the LamB/PxpA family. As to quaternary structure, forms a complex composed of PxpA, PxpB and PxpC.

It carries out the reaction 5-oxo-L-proline + ATP + 2 H2O = L-glutamate + ADP + phosphate + H(+). Catalyzes the cleavage of 5-oxoproline to form L-glutamate coupled to the hydrolysis of ATP to ADP and inorganic phosphate. The polypeptide is 5-oxoprolinase subunit A (Halalkalibacterium halodurans (strain ATCC BAA-125 / DSM 18197 / FERM 7344 / JCM 9153 / C-125) (Bacillus halodurans)).